Reading from the N-terminus, the 180-residue chain is Large ribosomal subunit protein uL5 (180 aa).

The protein belongs to the universal ribosomal protein uL5 family. In terms of assembly, part of the 50S ribosomal subunit; part of the 5S rRNA/L5/L18/L25 subcomplex. Contacts the 5S rRNA and the P site tRNA. Forms a bridge to the 30S subunit in the 70S ribosome.

Its function is as follows. This is one of the proteins that bind and probably mediate the attachment of the 5S RNA into the large ribosomal subunit, where it forms part of the central protuberance. In the 70S ribosome it contacts protein S13 of the 30S subunit (bridge B1b), connecting the 2 subunits; this bridge is implicated in subunit movement. Contacts the P site tRNA; the 5S rRNA and some of its associated proteins might help stabilize positioning of ribosome-bound tRNAs. This Lacticaseibacillus casei (strain BL23) (Lactobacillus casei) protein is Large ribosomal subunit protein uL5.